Here is a 478-residue protein sequence, read N- to C-terminus: MPPMPSAPPVHPPPDGGWGWIVVGAAFISIGFSYAFPKAVTVFFKEIQQIFHTTYSEIAWISSIMLAVMYAGGPVSSVLVNKYGSRPVVIAGGLLCCLGMVLASFSSSVVQLYLTMGFITGLGLAFNLQPALTIIGKYFYRKRPMANGLAMAGSPVFLSSLAPFNQYLFNTFGWKGSFLILGSLLLNACVAGSLMRPLGPNQTTSKSKNKTGKTEDDSSPKKIKTKKSTWEKVNKYLDFSLFKHRGFLIYLSGNVIMFLGFFAPIIFLAPYAKDQGIDEYSAAFLLSVMAFVDMFARPSVGLIANSKYIRPRIQYFFSFAIMFNGVCHLLCPLAQDYTSLVLYAVFFGLGFGSVSSVLFETLMDLVGAPRFSSAVGLVTIVECGPVLLGPPLAGKLVDLTGEYKYMYMSCGAIVVAASVWLLIGNAINYRLLAKERKEENARQKTRESEPLSKSKHSEDVNVKVSNAQSVTSERETNI.

Topologically, residues 1–15 (MPPMPSAPPVHPPPD) are cytoplasmic. A helical membrane pass occupies residues 16–36 (GGWGWIVVGAAFISIGFSYAF). Over 37 to 59 (PKAVTVFFKEIQQIFHTTYSEIA) the chain is Extracellular. A helical membrane pass occupies residues 60 to 80 (WISSIMLAVMYAGGPVSSVLV). Over 81-89 (NKYGSRPVV) the chain is Cytoplasmic. A helical transmembrane segment spans residues 90 to 110 (IAGGLLCCLGMVLASFSSSVV). Residues 111-115 (QLYLT) lie on the Extracellular side of the membrane. Residues 116-136 (MGFITGLGLAFNLQPALTIIG) traverse the membrane as a helical segment. Topologically, residues 137–148 (KYFYRKRPMANG) are cytoplasmic. A helical membrane pass occupies residues 149 to 169 (LAMAGSPVFLSSLAPFNQYLF). Over 170–173 (NTFG) the chain is Extracellular. Residues 174–194 (WKGSFLILGSLLLNACVAGSL) traverse the membrane as a helical segment. The Cytoplasmic segment spans residues 195-246 (MRPLGPNQTTSKSKNKTGKTEDDSSPKKIKTKKSTWEKVNKYLDFSLFKHRG). The disordered stretch occupies residues 200–224 (PNQTTSKSKNKTGKTEDDSSPKKIK). Residues 247-267 (FLIYLSGNVIMFLGFFAPIIF) form a helical membrane-spanning segment. Residues 268–282 (LAPYAKDQGIDEYSA) lie on the Extracellular side of the membrane. A helical transmembrane segment spans residues 283 to 303 (AFLLSVMAFVDMFARPSVGLI). At 304–312 (ANSKYIRPR) the chain is on the cytoplasmic side. A helical transmembrane segment spans residues 313–333 (IQYFFSFAIMFNGVCHLLCPL). Residues 334–338 (AQDYT) are Extracellular-facing. Residues 339-359 (SLVLYAVFFGLGFGSVSSVLF) form a helical membrane-spanning segment. Residues 360-373 (ETLMDLVGAPRFSS) are Cytoplasmic-facing. The chain crosses the membrane as a helical span at residues 374–394 (AVGLVTIVECGPVLLGPPLAG). Residues 395–406 (KLVDLTGEYKYM) are Extracellular-facing. The chain crosses the membrane as a helical span at residues 407–427 (YMSCGAIVVAASVWLLIGNAI). Over 428-478 (NYRLLAKERKEENARQKTRESEPLSKSKHSEDVNVKVSNAQSVTSERETNI) the chain is Cytoplasmic. The span at 437–461 (KEENARQKTRESEPLSKSKHSEDVN) shows a compositional bias: basic and acidic residues. Positions 437 to 478 (KEENARQKTRESEPLSKSKHSEDVNVKVSNAQSVTSERETNI) are disordered.

The protein belongs to the major facilitator superfamily. Monocarboxylate porter (TC 2.A.1.13) family. Homodimer. Interacts with GRID2IP. Interacts with EMB; interaction mediates SLC16A7 targeting to the plasma membrane. Interacts with isoform 2 of BSG. As to expression, detected in heart and in blood lymphocytes and monocytes (at protein level). High expression in testis, moderate to low in spleen, heart, kidney, pancreas, skeletal muscle, brain and leukocyte. Restricted expression in normal tissues, but widely expressed in cancer cells.

It is found in the cell membrane. It localises to the basolateral cell membrane. The protein resides in the cytoplasm. The catalysed reaction is pyruvate(out) + H(+)(out) = pyruvate(in) + H(+)(in). It carries out the reaction 3-methyl-2-oxobutanoate(out) + H(+)(out) = 3-methyl-2-oxobutanoate(in) + H(+)(in). It catalyses the reaction (S)-lactate(in) + H(+)(in) = (S)-lactate(out) + H(+)(out). The enzyme catalyses acetoacetate(out) + H(+)(out) = acetoacetate(in) + H(+)(in). The catalysed reaction is (R)-3-hydroxybutanoate(out) + H(+)(out) = (R)-3-hydroxybutanoate(in) + H(+)(in). It carries out the reaction 4-methyl-2-oxopentanoate(out) + H(+)(out) = 4-methyl-2-oxopentanoate(in) + H(+)(in). It catalyses the reaction (S)-3-hydroxybutanoate(out) + H(+)(out) = (S)-3-hydroxybutanoate(in) + H(+)(in). Transport activity exhibits steep dependence on substrate concentration. Substrate concentration sensitivity of SLC16A7 arises from the strong inter-subunit cooperativity of the SLC16A7 dimer during transport. Inhibited by AR-C155858. Its function is as follows. Proton-coupled monocarboxylate symporter. Catalyzes the rapid transport across the plasma membrane of monocarboxylates such as L-lactate, pyruvate and ketone bodies, acetoacetate, beta-hydroxybutyrate and acetate. Dimerization is functionally required and both subunits work cooperatively in transporting substrate. This chain is Monocarboxylate transporter 2, found in Homo sapiens (Human).